The following is a 114-amino-acid chain: NADH-ubiquinone oxidoreductase chain 3 (114 aa).

3 consecutive transmembrane segments (helical) span residues 4 to 24 (LVYI…SYLL), 55 to 75 (FYLI…ILPF), and 82 to 102 (VSLL…IGFI).

It belongs to the complex I subunit 3 family.

The protein resides in the mitochondrion membrane. The catalysed reaction is a ubiquinone + NADH + 5 H(+)(in) = a ubiquinol + NAD(+) + 4 H(+)(out). Its function is as follows. Core subunit of the mitochondrial membrane respiratory chain NADH dehydrogenase (Complex I) that is believed to belong to the minimal assembly required for catalysis. Complex I functions in the transfer of electrons from NADH to the respiratory chain. The immediate electron acceptor for the enzyme is believed to be ubiquinone. This chain is NADH-ubiquinone oxidoreductase chain 3 (ND3), found in Allomyces macrogynus.